A 291-amino-acid chain; its full sequence is Small ribosomal subunit biogenesis GTPase RsgA (291 aa).

Positions 63–221 constitute a CP-type G domain; it reads QNELKRPPVS…VADTPGFSAL (159 aa). GTP is bound by residues 112–115 and 164–172; these read TKKD and GQSGVGKST. Residues C245, C250, H252, and C258 each coordinate Zn(2+).

This sequence belongs to the TRAFAC class YlqF/YawG GTPase family. RsgA subfamily. As to quaternary structure, monomer. Associates with 30S ribosomal subunit, binds 16S rRNA. It depends on Zn(2+) as a cofactor.

Its subcellular location is the cytoplasm. Its function is as follows. One of several proteins that assist in the late maturation steps of the functional core of the 30S ribosomal subunit. Helps release RbfA from mature subunits. May play a role in the assembly of ribosomal proteins into the subunit. Circularly permuted GTPase that catalyzes slow GTP hydrolysis, GTPase activity is stimulated by the 30S ribosomal subunit. The polypeptide is Small ribosomal subunit biogenesis GTPase RsgA (Staphylococcus carnosus (strain TM300)).